The sequence spans 883 residues: Serine/threonine-protein phosphatase BSL1 homolog (883 aa).

Kelch repeat units lie at residues 64 to 113, 221 to 271, 273 to 323, and 341 to 387; these read ASSG…AVGT, MLLL…VFVG, RLHV…DHDA, and QIYI…NRNH. 3 disordered regions span residues 381 to 402, 430 to 466, and 499 to 525; these read ENQNRNHNFNSDSPTTNNSTDK, SHASSEDSLSEGIGSESPLSETSPMPEDLDDGGSLEP, and NESRRMHPSSNDQSYPAKKALNRQRSP. The segment covering 385-399 has biased composition (polar residues); that stretch reads RNHNFNSDSPTTNNS. D586, H588, D620, and N652 together coordinate Mn(2+). H653 serves as the catalytic Proton donor. Mn(2+)-binding residues include H705 and H784. The interval 861-883 is disordered; that stretch reads QRPPTPTRGRPQSASDRNSLAYI. A compositionally biased stretch (polar residues) spans 872-883; sequence QSASDRNSLAYI.

It belongs to the PPP phosphatase family. BSU subfamily. Interacts with the phosphorylated form of BSK3. Mn(2+) serves as cofactor.

It is found in the nucleus. The catalysed reaction is O-phospho-L-seryl-[protein] + H2O = L-seryl-[protein] + phosphate. The enzyme catalyses O-phospho-L-threonyl-[protein] + H2O = L-threonyl-[protein] + phosphate. The protein is Serine/threonine-protein phosphatase BSL1 homolog (BSL1) of Oryza sativa subsp. japonica (Rice).